The chain runs to 365 residues: Autoinducer 2-binding periplasmic protein LuxP (365 aa).

A signal peptide spans 1-23; it reads MKKALLFSLISMVGFSPASQATQ.

Belongs to the bacterial solute-binding protein 2 family.

The protein resides in the periplasm. Binds to the signaling molecule autoinducer 2 (AI-2), a furanosyl borate diester, (3a-methyl-5,6-dihydrofuro-[2,3d][1,3,2]dioxaborole-2,2,6,6a-tetraol). This complex then interacts with the LuxQ sensor protein. This Vibrio harveyi (Beneckea harveyi) protein is Autoinducer 2-binding periplasmic protein LuxP (luxP).